The sequence spans 251 residues: Hydroxyacylglutathione hydrolase (251 aa).

His53, His55, Asp57, His58, His110, Asp127, and His165 together coordinate Zn(2+).

It belongs to the metallo-beta-lactamase superfamily. Glyoxalase II family. Monomer. It depends on Zn(2+) as a cofactor.

The catalysed reaction is an S-(2-hydroxyacyl)glutathione + H2O = a 2-hydroxy carboxylate + glutathione + H(+). The protein operates within secondary metabolite metabolism; methylglyoxal degradation; (R)-lactate from methylglyoxal: step 2/2. In terms of biological role, thiolesterase that catalyzes the hydrolysis of S-D-lactoyl-glutathione to form glutathione and D-lactic acid. The chain is Hydroxyacylglutathione hydrolase from Shigella boydii serotype 4 (strain Sb227).